Reading from the N-terminus, the 142-residue chain is Maximins y/H11 (142 aa).

Residues 1–18 (MNFKYIVAVSFLITSGYA) form the signal peptide. The propeptide occupies 19 to 43 (ESVKNDEQSLSQRDVLEEESLREIR). F68 carries the post-translational modification Phenylalanine amide. Positions 72–121 (SAEDHEVMKRLEAVIRDLDSLDHPEEASERETRGFNQEEIANLFTKKEKR) are excised as a propeptide. I141 carries the isoleucine amide modification.

Belongs to the bombinin family. In terms of tissue distribution, expressed by the skin glands.

It is found in the secreted. In terms of biological role, maximin-y shows antimicrobial activity against bacteria and against the fungus C.albicans. It has little hemolytic activity. Its function is as follows. Maximin-H11 shows antimicrobial activity against bacteria and against the fungus C.albicans. Shows strong hemolytic activity. This chain is Maximins y/H11, found in Bombina maxima (Giant fire-bellied toad).